A 205-amino-acid chain; its full sequence is Microtubule-associated protein Jupiter (205 aa).

A Phosphoserine modification is found at S30. Phosphothreonine is present on residues T41, T98, and T102. Polar residues predominate over residues 124–135 (LISNSKGNYNGK). The tract at residues 124–205 (LISNSKGNYN…PPGGYSSGLW (82 aa)) is disordered. Residues 136 to 149 (SGSVSSASSSVSSS) are compositionally biased toward low complexity. Phosphoserine is present on residues S138 and S149. Polar residues predominate over residues 181 to 191 (PANNGSSQVIN).

The protein belongs to the MAP Jupiter family.

The protein localises to the nucleus. Its subcellular location is the cytoplasm. It is found in the cytoskeleton. The protein resides in the spindle. In terms of biological role, binds to all microtubule populations. The chain is Microtubule-associated protein Jupiter from Drosophila virilis (Fruit fly).